We begin with the raw amino-acid sequence, 509 residues long: MWVLLGVFLLTLAYLFWPKTKHSAAKYPRSLPSLPLVGSLLFLPRRGQQHENFFKLQEKYGPIYSFRLGSKTTVMIGHHQLAREVLLKKGKEFSGRPKVATLDILSDNQKGIAFADHGAHWQLHRKLVLNAFALFKDGNLKLEKIINQEANVLCDFLATQHGQSIDLSEPLSLAVTNIISFICFNFSFKNEDPALKAIQNVNDGILEVLSKEILLDIFPALKIFPSKAMEKMKGCVETRNELLNEILEKCQENFTSDSITNLLHILMQAKVNADNNNAGPDQDSKLLSNRHMLATIADIFGAGVETTTSVIKWIVAYLLHHPSLKKRIQDSIDQNIGFNRTPTISDRNCLVLLEATIREVLRIRPVAPMLIPHKAIIDSSIGDLTIDKGTDVVVNLWALHHNEKEWQQPDLFMPERFLDPTGTQLISPSLSYLPFGAGPRSCVGEMLARQELFLFMSRLLQRFNLEIPDDGKLPSLEGNPSLVLQIKPFKVKIEVRQAWKEAQAEGSTS.

Asn202 is a binding site for substrate. Cys442 is a binding site for heme.

Belongs to the cytochrome P450 family. Requires heme as cofactor.

The protein localises to the endoplasmic reticulum membrane. The protein resides in the microsome membrane. The catalysed reaction is a C21-steroid + reduced [NADPH--hemoprotein reductase] + O2 = a 17alpha-hydroxy-C21-steroid + oxidized [NADPH--hemoprotein reductase] + H2O + H(+). It carries out the reaction progesterone + reduced [NADPH--hemoprotein reductase] + O2 = 17alpha-hydroxyprogesterone + oxidized [NADPH--hemoprotein reductase] + H2O + H(+). The enzyme catalyses pregnenolone + reduced [NADPH--hemoprotein reductase] + O2 = 17alpha-hydroxypregnenolone + oxidized [NADPH--hemoprotein reductase] + H2O + H(+). It catalyses the reaction 17alpha-hydroxyprogesterone + reduced [NADPH--hemoprotein reductase] + O2 = androst-4-ene-3,17-dione + acetate + oxidized [NADPH--hemoprotein reductase] + H2O + 2 H(+). The catalysed reaction is 17alpha-hydroxyprogesterone + reduced [NADPH--hemoprotein reductase] + O2 = 16alpha,17alpha-dihydroxyprogesterone + oxidized [NADPH--hemoprotein reductase] + H2O + H(+). It carries out the reaction 16alpha,17alpha-dihydroxyprogesterone + reduced [NADPH--hemoprotein reductase] + O2 = 6beta,16alpha,17alpha-trihydroxyprogesterone + oxidized [NADPH--hemoprotein reductase] + H2O + H(+). The enzyme catalyses 17alpha-hydroxypregnenolone + reduced [NADPH--hemoprotein reductase] + O2 = 3beta-hydroxyandrost-5-en-17-one + acetate + oxidized [NADPH--hemoprotein reductase] + H2O + 2 H(+). It catalyses the reaction 16alpha,17alpha-dihydroxypregnenolone + reduced [NADPH--hemoprotein reductase] + O2 = 3beta,16alpha-dihydroxy-androst-5-en-17-one + acetate + oxidized [NADPH--hemoprotein reductase] + H2O + 2 H(+). The catalysed reaction is 3beta-hydroxyandrost-5-en-17-one + reduced [NADPH--hemoprotein reductase] + O2 = 3beta,16alpha-dihydroxy-androst-5-en-17-one + oxidized [NADPH--hemoprotein reductase] + H2O + H(+). It carries out the reaction androst-4-ene-3,17-dione + reduced [NADPH--hemoprotein reductase] + O2 = 16alpha-hydroxyandrost-4-ene-3,17-dione + oxidized [NADPH--hemoprotein reductase] + H2O + H(+). Its pathway is steroid hormone biosynthesis. The protein operates within steroid biosynthesis; glucocorticoid biosynthesis. Its activity is regulated as follows. Regulated predominantly by intracellular cAMP levels. The 17,20-lyase activity is stimulated by cytochrome b5, which acts as an allosteric effector increasing the Vmax of the lyase activity. A cytochrome P450 monooxygenase involved in corticoid and androgen biosynthesis. Catalyzes 17-alpha hydroxylation of C21 steroids, which is common for both pathways. A second oxidative step, required only for androgen synthesis, involves an acyl-carbon cleavage. The 17-alpha hydroxy intermediates, as part of adrenal glucocorticoids biosynthesis pathway, are precursors of cortisol. Hydroxylates steroid hormones, pregnenolone and progesterone to form 17-alpha hydroxy metabolites, followed by the cleavage of the C17-C20 bond to form C19 steroids, dehydroepiandrosterone (DHEA) and androstenedione. Has 16-alpha hydroxylase activity. Catalyzes 16-alpha hydroxylation of 17-alpha hydroxy pregnenolone, followed by the cleavage of the C17-C20 bond to form 16-alpha-hydroxy DHEA. Also 16-alpha hydroxylates androgens, relevant for estriol synthesis. Mechanistically, uses molecular oxygen inserting one oxygen atom into a substrate, and reducing the second into a water molecule, with two electrons provided by NADPH via cytochrome P450 reductase (CPR; NADPH-ferrihemoprotein reductase). The protein is Steroid 17-alpha-hydroxylase/17,20 lyase (CYP17A1) of Capra hircus (Goat).